A 478-amino-acid chain; its full sequence is Septin-4 (478 aa).

Disordered regions lie at residues 40-74 (DFSG…LYDD) and 87-115 (ADNQ…LDPY). Over residues 95–108 (APAPLSPSARPRSP) the composition is skewed to low complexity. Phosphoserine is present on residues S117 and S118. The 274-residue stretch at 141–414 (KGFDFTLMVA…ENYRAQCIQS (274 aa)) folds into the Septin-type G domain. Residues 151–158 (GESGLGKS) are G1 motif. GTP contacts are provided by residues 151–158 (GESGLGKS) and T185. Positions 208–211 (DTPG) are G3 motif. The tract at residues 289–292 (AKAD) is G4 motif. 290–298 (KADTLTPPE) lines the GTP pocket. S325 carries the post-translational modification Phosphoserine. Positions 348 and 363 each coordinate GTP. The disordered stretch occupies residues 428–448 (LTRESGTDFPIPAVPPGTDPE). The residue at position 432 (S432) is a Phosphoserine. Position 434 is a phosphothreonine (T434). Positions 446–478 (DPETEKLIREKDEELRRMQEILHKIQKQMKETY) form a coiled coil.

It belongs to the TRAFAC class TrmE-Era-EngA-EngB-Septin-like GTPase superfamily. Septin GTPase family. In terms of assembly, septins polymerize into heterooligomeric protein complexes that form filaments, and can associate with cellular membranes, actin filaments and microtubules. GTPase activity is required for filament formation. Interacts with SEPTIN8. Component of a septin core octameric complex consisting of SEPTIN12, SEPTIN7, SEPTIN6 and SEPTIN2 or SEPTIN4 in the order 12-7-6-2-2-6-7-12 or 12-7-6-4-4-6-7-12. Interacts with SEPTIN14 (via C-terminus). Interacts with DYRK1A. Interacts with SLC6A3/DAT and SNCA/alpha-synuclein. Interacts with STX1A; in the striatum. Interacts with XIAP (via BIR3 domain) following the induction of apoptosis. Interacts with AREL1 (via HECT domain); in the cytoplasm following induction of apoptosis. In terms of processing, ubiquitinated by AREL1. Phosphorylated by DYRK1A.

Its subcellular location is the cytoplasm. The protein localises to the cell projection. The protein resides in the cilium. It localises to the flagellum. It is found in the cytoplasmic vesicle. Its subcellular location is the secretory vesicle. The protein localises to the axon. The protein resides in the dendrite. It localises to the perikaryon. It is found in the synapse. Functionally, filament-forming cytoskeletal GTPase. Pro-apoptotic protein involved in LGR5-positive intestinal stem cell and Paneth cell expansion in the intestines, via its interaction with XIAP. May also play a role in the regulation of cell fate in the intestine. Positive regulator of apoptosis involved in hematopoietic stem cell homeostasis; via its interaction with XIAP. Negative regulator of repair and hair follicle regeneration in response to injury, due to inhibition of hair follicle stem cell proliferation, potentially via its interaction with XIAP. Plays an important role in male fertility and sperm motility. During spermiogenesis, essential for the establishment of the annulus (a fibrous ring structure connecting the midpiece and the principal piece of the sperm flagellum) which is a requisite for the structural and mechanical integrity of the sperm. Involved in the migration of cortical neurons and the formation of neuron leading processes during embryonic development. Required for dopaminergic metabolism in presynaptic autoreceptors; potentially via activity as a presynaptic scaffold protein. This chain is Septin-4, found in Macaca fascicularis (Crab-eating macaque).